The primary structure comprises 186 residues: Probable RNA 2'-phosphotransferase (186 aa).

This sequence belongs to the KptA/TPT1 family.

Functionally, removes the 2'-phosphate from RNA via an intermediate in which the phosphate is ADP-ribosylated by NAD followed by a presumed transesterification to release the RNA and generate ADP-ribose 1''-2''-cyclic phosphate (APPR&gt;P). May function as an ADP-ribosylase. This Agrobacterium fabrum (strain C58 / ATCC 33970) (Agrobacterium tumefaciens (strain C58)) protein is Probable RNA 2'-phosphotransferase.